A 138-amino-acid polypeptide reads, in one-letter code: Transcription antitermination protein NusB (138 aa).

Belongs to the NusB family.

Functionally, involved in transcription antitermination. Required for transcription of ribosomal RNA (rRNA) genes. Binds specifically to the boxA antiterminator sequence of the ribosomal RNA (rrn) operons. The sequence is that of Transcription antitermination protein NusB from Yersinia enterocolitica serotype O:8 / biotype 1B (strain NCTC 13174 / 8081).